The primary structure comprises 151 residues: Putative pre-16S rRNA nuclease (151 aa).

It belongs to the YqgF nuclease family.

It is found in the cytoplasm. Could be a nuclease involved in processing of the 5'-end of pre-16S rRNA. This Neisseria meningitidis serogroup B (strain ATCC BAA-335 / MC58) protein is Putative pre-16S rRNA nuclease.